Consider the following 366-residue polypeptide: Aminomethyltransferase (366 aa).

This sequence belongs to the GcvT family. In terms of assembly, the glycine cleavage system is composed of four proteins: P, T, L and H.

It catalyses the reaction N(6)-[(R)-S(8)-aminomethyldihydrolipoyl]-L-lysyl-[protein] + (6S)-5,6,7,8-tetrahydrofolate = N(6)-[(R)-dihydrolipoyl]-L-lysyl-[protein] + (6R)-5,10-methylene-5,6,7,8-tetrahydrofolate + NH4(+). The glycine cleavage system catalyzes the degradation of glycine. This Bacillus anthracis (strain A0248) protein is Aminomethyltransferase.